Reading from the N-terminus, the 307-residue chain is MIFNHHQSVMLNESIGALNIKTDGIYIDATFGRGGHAQGILNKLGEQGKLIAFDQDINAIEYAHKNFTDSRLTLIYSAFSNMLNIITQQGLMSKIDGILMDLGVSSPQLDNAQRGFSFKADGPLDMRMNQTTGMSATQWLNLANEEEIANVIYQFGDEKRSRHIATRIKKYQQKHTLETTLALAGIVSKVVKRQKNKHPATRTFQAIRIFINQELKQLEDVLEQSKDILRKDGRLSIISFHSIEDRIVKHFIQKNSRQKNLPKGLPIIDYKIEKTCLKNLGKYFASKAEISRNKRARSAILRVASKN.

S-adenosyl-L-methionine contacts are provided by residues 34 to 36 (GGH), D54, F79, D101, and Q108.

It belongs to the methyltransferase superfamily. RsmH family.

Its subcellular location is the cytoplasm. It catalyses the reaction cytidine(1402) in 16S rRNA + S-adenosyl-L-methionine = N(4)-methylcytidine(1402) in 16S rRNA + S-adenosyl-L-homocysteine + H(+). Functionally, specifically methylates the N4 position of cytidine in position 1402 (C1402) of 16S rRNA. The polypeptide is Ribosomal RNA small subunit methyltransferase H (Ruthia magnifica subsp. Calyptogena magnifica).